The following is a 713-amino-acid chain: MLKKEYLKNPYLVLFAMIVLAYVFSVFCRFYWVWWASEFNEYFFNNQLMIISNDGYAFAEGARDMIAGFHQPNDLSYYGSSLSTLTYWLYKITPFSFESIILYMSTFLSSLVVIPIILLANEYKRPLMGFVAALLASVANSYYNRTMSGYYDTDMLVIVLPMFILFFMVRMILKKDFFSLIALPLFIGIYLWWYPSSYTLNVALIGLFLIYTLIFHRKEKIFYIAVILSSLTLSNIAWFYQSAIIVILFALFALEQKRLNFMIIGILGSATLIFLILSGGVDPILYQLKFYIFRSDESANLTQGFMYFNVNQTIQEVENVDFSEFMRRISGSEIVFLFSLFGFVWLLRKHKSMIMALPILVLGFLALKGGLRFTIYSVPVMALGFGFLLSEFKAILVKKYSQLTSNVCIVFATILTLAPVFIHIYNYKAPTVFSQNEASLLNQLKNIANREDYVVTWWDYGYPVRYYSDVKTLVDGGKHLGKDNFFPSFSLSKDEQAAANMARLSVEYTEKSFYAPQNDILKSDILQAMMKDYNQSNVDLFLASLSKPDFKIDTPKTRDIYLYMPARMSLIFSTVASFSFINLDTGVLDKPFTFSTAYPLDVKNGEIYLSNGVVLSDDFRSFKIGDNVVSVNSIVEINSIKQGEYKITPIDDKAQFYIFYLKDSAIPYAQFILMDKTMFNSAYVQMFFLGNYDKNLFDLVINSRDAKVFKLKI.

At 1–11 (MLKKEYLKNPY) the chain is on the cytoplasmic side. Residues 12 to 35 (LVLFAMIVLAYVFSVFCRFYWVWW) form a helical membrane-spanning segment. At 36-96 (ASEFNEYFFN…YWLYKITPFS (61 aa)) the chain is on the periplasmic side. The DXD motif 1 signature appears at 52 to 54 (SND). D54 contacts Mn(2+). Residues 97-122 (FESIILYMSTFLSSLVVIPIILLANE) form a helical membrane-spanning segment. Over 123 to 125 (YKR) the chain is Cytoplasmic. A helical transmembrane segment spans residues 126–144 (PLMGFVAALLASVANSYYN). The Periplasmic segment spans residues 145–152 (RTMSGYYD). Residue D152 participates in Mn(2+) binding. The DXD motif 2 motif lies at 152-154 (DTD). Residues 153-174 (TDMLVIVLPMFILFFMVRMILK) form a helical membrane-spanning segment. Residues 175 to 176 (KD) lie on the Cytoplasmic side of the membrane. A helical transmembrane segment spans residues 177-192 (FFSLIALPLFIGIYLW). Residues 193–197 (WYPSS) lie on the Periplasmic side of the membrane. 194-196 (YPS) lines the [alpha-D-GalNAc-(1-&gt;4)]2-[beta-D-Glc-(1-&gt;3)]-[alpha-D-GalNAc-(1-&gt;4)]2-alpha-D-GalNAc-(1-&gt;3)-alpha-D-diNAcBac-tri-trans,hepta-cis-undecaprenyl diphosphate pocket. The helical transmembrane segment at 198–215 (YTLNVALIGLFLIYTLIF) threads the bilayer. Over 216–220 (HRKEK) the chain is Cytoplasmic. Residues 221 to 233 (IFYIAVILSSLTL) traverse the membrane as a helical segment. Topologically, residues 234 to 237 (SNIA) are periplasmic. A helical membrane pass occupies residues 238-254 (WFYQSAIIVILFALFAL). Residues 255 to 260 (EQKRLN) lie on the Cytoplasmic side of the membrane. The helical transmembrane segment at 261-278 (FMIIGILGSATLIFLILS) threads the bilayer. Residues 279-324 (GGVDPILYQLKFYIFRSDESANLTQGFMYFNVNQTIQEVENVDFSE) lie on the Periplasmic side of the membrane. Y291 provides a ligand contact to [alpha-D-GalNAc-(1-&gt;4)]2-[beta-D-Glc-(1-&gt;3)]-[alpha-D-GalNAc-(1-&gt;4)]2-alpha-D-GalNAc-(1-&gt;3)-alpha-D-diNAcBac-tri-trans,hepta-cis-undecaprenyl diphosphate. Positions 313 to 316 (TIQE) match the TIXE motif motif. E316 contributes to the Mn(2+) binding site. The chain crosses the membrane as a helical span at residues 325-347 (FMRRISGSEIVFLFSLFGFVWLL). The Cytoplasmic segment spans residues 348–352 (RKHKS). A helical membrane pass occupies residues 353–369 (MIMALPILVLGFLALKG). At 370-373 (GLRF) the chain is on the periplasmic side. R372 is a binding site for [alpha-D-GalNAc-(1-&gt;4)]2-[beta-D-Glc-(1-&gt;3)]-[alpha-D-GalNAc-(1-&gt;4)]2-alpha-D-GalNAc-(1-&gt;3)-alpha-D-diNAcBac-tri-trans,hepta-cis-undecaprenyl diphosphate. The chain crosses the membrane as a helical span at residues 374–396 (TIYSVPVMALGFGFLLSEFKAIL). Topologically, residues 397–406 (VKKYSQLTSN) are cytoplasmic. A helical transmembrane segment spans residues 407-427 (VCIVFATILTLAPVFIHIYNY). Over 428–713 (KAPTVFSQNE…RDAKVFKLKI (286 aa)) the chain is Periplasmic. The interacts with target acceptor peptide in protein substrate stretch occupies residues 457-459 (WWD). Positions 457–461 (WWDYG) match the WWDYG motif motif. Y462 contributes to the [alpha-D-GalNAc-(1-&gt;4)]2-[beta-D-Glc-(1-&gt;3)]-[alpha-D-GalNAc-(1-&gt;4)]2-alpha-D-GalNAc-(1-&gt;3)-alpha-D-diNAcBac-tri-trans,hepta-cis-undecaprenyl diphosphate binding site. N-linked (DATDGlc) asparagine glycosylation is present at N534. The MI motif motif lies at 568–575 (MSLIFSTV).

The protein belongs to the STT3 family. It depends on Mg(2+) as a cofactor. Requires Mn(2+) as cofactor.

The protein resides in the cell inner membrane. It carries out the reaction tritrans,heptacis-undecaprenyl diphosphooligosaccharide + [protein]-L-asparagine = tritrans,heptacis-undecaprenyl diphosphate + a glycoprotein with the oligosaccharide chain attached by N-beta-D-glycosyl linkage to protein L-asparagine.. It functions in the pathway protein modification; protein glycosylation. Oligosaccharyl transferase (OST) that catalyzes the initial transfer of a defined glycan (GalNAc(2)GlcGalNAc(3)Bac(NAc)(2) in eubacteria, where Bac(NAc)(2) is di-N-acetyl bacillosamine) from the lipid carrier undecaprenol-pyrophosphate to an asparagine residue within an Asp/Glu-Asn-X-Ser/Thr consensus motif in nascent polypeptide chains, the first step in protein N-glycosylation. In Campylobacter jejuni subsp. jejuni serotype O:2 (strain ATCC 700819 / NCTC 11168), this protein is Undecaprenyl-diphosphooligosaccharide--protein glycotransferase (pglB).